Here is a 431-residue protein sequence, read N- to C-terminus: 3-isopropylmalate dehydratase large subunit (431 aa).

Residues C308, C368, and C371 each contribute to the [4Fe-4S] cluster site.

This sequence belongs to the aconitase/IPM isomerase family. LeuC type 2 subfamily. As to quaternary structure, heterodimer of LeuC and LeuD. [4Fe-4S] cluster serves as cofactor.

The enzyme catalyses (2R,3S)-3-isopropylmalate = (2S)-2-isopropylmalate. Its pathway is amino-acid biosynthesis; L-leucine biosynthesis; L-leucine from 3-methyl-2-oxobutanoate: step 2/4. In terms of biological role, catalyzes the isomerization between 2-isopropylmalate and 3-isopropylmalate, via the formation of 2-isopropylmaleate. The protein is 3-isopropylmalate dehydratase large subunit of Desulfosudis oleivorans (strain DSM 6200 / JCM 39069 / Hxd3) (Desulfococcus oleovorans).